Consider the following 697-residue polypeptide: Potassium-transporting ATPase ATP-binding subunit (697 aa).

Transmembrane regions (helical) follow at residues 55 to 75, 79 to 99, 245 to 265, and 271 to 291; these read PIMF…FLPS, SIPG…VLFA, LTLI…YLGF, and VLVA…LSAI. The 4-aspartylphosphate intermediate role is filled by Asp-324. Residues Asp-361, Glu-365, 393–400, and Lys-412 contribute to the ATP site; that span reads FKAETRMS. Mg(2+)-binding residues include Asp-535 and Asp-539. The next 3 helical transmembrane spans lie at 605–625, 633–653, and 677–697; these read FAII…LNIM, AILS…PLAM, and GGVI…GLFI.

The protein belongs to the cation transport ATPase (P-type) (TC 3.A.3) family. Type IA subfamily. As to quaternary structure, the system is composed of three essential subunits: KdpA, KdpB and KdpC.

It is found in the cell membrane. It catalyses the reaction K(+)(out) + ATP + H2O = K(+)(in) + ADP + phosphate + H(+). Part of the high-affinity ATP-driven potassium transport (or Kdp) system, which catalyzes the hydrolysis of ATP coupled with the electrogenic transport of potassium into the cytoplasm. This subunit is responsible for energy coupling to the transport system and for the release of the potassium ions to the cytoplasm. In Bacillus anthracis (strain CDC 684 / NRRL 3495), this protein is Potassium-transporting ATPase ATP-binding subunit.